The following is a 388-amino-acid chain: MREYAVFTSESVSEGHPDKMADQISDAILDAILKEDPYARVACETLVKTGAVVLAGEITTTANIDVEAVVRQTVNGIGYHHSDLGFDGSTCAVINMIGKQSPEIAQGVDRQKPEDQGAGDQGLMFGYASRETDVLMPAPISYAHRLMERQAELRRSGALPWLRPDAKSQVTFAYENGKPVRLDAVVLSTQHDPEITQTQLKEAVIEEIIKPIIPAEMFHAATKFHINPTGMFVIGGPVGDCGLTGRKIIVDTYGGMARHGGGAFSGKDPSKVDRSAAYAGRYVAKNIVAAGLADKCEIQVSYAIGVAEPTSISINTFGTAKVSDELIIQLVREHFDLRPFGITRMLNLIQPMYKQTAAYGHFGREGSNTAFTWEKTDKVEALKDAAGL.

H16 provides a ligand contact to ATP. Mg(2+) is bound at residue D18. A K(+)-binding site is contributed by E44. L-methionine is bound by residues E57 and Q100. The interval 100 to 110 (QSPEIAQGVDR) is flexible loop. ATP contacts are provided by residues 165 to 167 (DAK), D240, 246 to 247 (RK), A263, and K267. D240 lines the L-methionine pocket. K271 lines the L-methionine pocket.

The protein belongs to the AdoMet synthase family. Homotetramer; dimer of dimers. Mg(2+) is required as a cofactor. It depends on K(+) as a cofactor.

Its subcellular location is the cytoplasm. It catalyses the reaction L-methionine + ATP + H2O = S-adenosyl-L-methionine + phosphate + diphosphate. Its pathway is amino-acid biosynthesis; S-adenosyl-L-methionine biosynthesis; S-adenosyl-L-methionine from L-methionine: step 1/1. Functionally, catalyzes the formation of S-adenosylmethionine (AdoMet) from methionine and ATP. The overall synthetic reaction is composed of two sequential steps, AdoMet formation and the subsequent tripolyphosphate hydrolysis which occurs prior to release of AdoMet from the enzyme. This is S-adenosylmethionine synthase from Acinetobacter baumannii (strain AYE).